Reading from the N-terminus, the 847-residue chain is DNA gyrase subunit A (847 aa).

The Topo IIA-type catalytic domain occupies 34 to 533 (LPDVRDGLKP…NYSDINTSDL (500 aa)). The active-site O-(5'-phospho-DNA)-tyrosine intermediate is the Y122. The GyrA-box motif lies at 560 to 566 (QKRGGKG).

The protein belongs to the type II topoisomerase GyrA/ParC subunit family. As to quaternary structure, heterotetramer, composed of two GyrA and two GyrB chains. In the heterotetramer, GyrA contains the active site tyrosine that forms a transient covalent intermediate with DNA, while GyrB binds cofactors and catalyzes ATP hydrolysis.

It is found in the cytoplasm. It catalyses the reaction ATP-dependent breakage, passage and rejoining of double-stranded DNA.. Its function is as follows. A type II topoisomerase that negatively supercoils closed circular double-stranded (ds) DNA in an ATP-dependent manner to modulate DNA topology and maintain chromosomes in an underwound state. Negative supercoiling favors strand separation, and DNA replication, transcription, recombination and repair, all of which involve strand separation. Also able to catalyze the interconversion of other topological isomers of dsDNA rings, including catenanes and knotted rings. Type II topoisomerases break and join 2 DNA strands simultaneously in an ATP-dependent manner. The protein is DNA gyrase subunit A of Buchnera aphidicola subsp. Baizongia pistaciae (strain Bp).